Reading from the N-terminus, the 74-residue chain is U3-agatoxin-Ao1b (74 aa).

Residues 1–20 form the signal peptide; sequence MKAAISLIIFFAILFVVIEA. Positions 21–34 are excised as a propeptide; sequence ISYEEGKELFQKER. 4 disulfide bridges follow: cysteine 37–cysteine 53, cysteine 44–cysteine 58, cysteine 52–cysteine 68, and cysteine 60–cysteine 66. At serine 72 the chain carries Serine amide.

It belongs to the neurotoxin 07 (Beta/delta-agtx) family. 02 (aga-3) subfamily. As to expression, expressed by the venom gland.

It is found in the secreted. In terms of biological role, insecticidal neurotoxin that induces an irreversible spastic paralysis when injected into insects. Modifies presynaptic voltage-gated sodium channels (Nav), causing them to open at the normal resting potential of the nerve. This leads to spontaneous release of neurotransmitter and repetitive action potentials in motor neurons. In Agelena orientalis (Funnel-web spider), this protein is U3-agatoxin-Ao1b.